A 297-amino-acid chain; its full sequence is Lipoyl synthase (297 aa).

[4Fe-4S] cluster-binding residues include C37, C42, C48, C63, C67, C70, and S276. The region spanning 49–265 (WSRKHATVMI…ERIAKTKGFL (217 aa)) is the Radical SAM core domain.

This sequence belongs to the radical SAM superfamily. Lipoyl synthase family. It depends on [4Fe-4S] cluster as a cofactor.

It is found in the cytoplasm. It catalyses the reaction [[Fe-S] cluster scaffold protein carrying a second [4Fe-4S](2+) cluster] + N(6)-octanoyl-L-lysyl-[protein] + 2 oxidized [2Fe-2S]-[ferredoxin] + 2 S-adenosyl-L-methionine + 4 H(+) = [[Fe-S] cluster scaffold protein] + N(6)-[(R)-dihydrolipoyl]-L-lysyl-[protein] + 4 Fe(3+) + 2 hydrogen sulfide + 2 5'-deoxyadenosine + 2 L-methionine + 2 reduced [2Fe-2S]-[ferredoxin]. The protein operates within protein modification; protein lipoylation via endogenous pathway; protein N(6)-(lipoyl)lysine from octanoyl-[acyl-carrier-protein]: step 2/2. Functionally, catalyzes the radical-mediated insertion of two sulfur atoms into the C-6 and C-8 positions of the octanoyl moiety bound to the lipoyl domains of lipoate-dependent enzymes, thereby converting the octanoylated domains into lipoylated derivatives. The protein is Lipoyl synthase of Rickettsia typhi (strain ATCC VR-144 / Wilmington).